The following is a 166-amino-acid chain: EndA-like protein (166 aa).

Belongs to the tRNA-intron endonuclease family. Archaeal short subfamily.

The chain is EndA-like protein from Methanopyrus kandleri (strain AV19 / DSM 6324 / JCM 9639 / NBRC 100938).